Here is a 67-residue protein sequence, read N- to C-terminus: Small ribosomal subunit protein eS27 (67 aa).

Zn(2+) contacts are provided by Cys22, Cys25, Cys41, and Cys44. The C4-type zinc finger occupies 22-44 (CPDCGNEQVVFSHAAMVVRCLVC).

The protein belongs to the eukaryotic ribosomal protein eS27 family. In terms of assembly, part of the 30S ribosomal subunit. Requires Zn(2+) as cofactor.

The sequence is that of Small ribosomal subunit protein eS27 from Pyrobaculum islandicum (strain DSM 4184 / JCM 9189 / GEO3).